The sequence spans 188 residues: GTPase KRas (188 aa).

GTP-binding positions include 10-18 (GAGGVGKSA), 29-35 (VDEYDPT), 59-60 (AG), and 116-119 (NKYD). Residues 32-40 (YDPTIEDSY) carry the Effector region motif. A disordered region spans residues 167 to 188 (KEKMSKEGKKKKKKSKTKCILM). Position 185 is a cysteine methyl ester (Cys185). Cys185 carries S-farnesyl cysteine lipidation. A propeptide spans 186 to 188 (ILM) (removed in mature form).

Belongs to the small GTPase superfamily. Ras family.

Its subcellular location is the cell membrane. It is found in the cytoplasm. The catalysed reaction is GTP + H2O = GDP + phosphate + H(+). With respect to regulation, alternates between an inactive form bound to GDP and an active form bound to GTP. Activated by a guanine nucleotide-exchange factor (GEF) and inactivated by a GTPase-activating protein (GAP). Ras proteins bind GDP/GTP and possess intrinsic GTPase activity. Plays an important role in the regulation of cell proliferation. May play a role in promoting oncogenic events by inducing transcriptional silencing of tumor suppressor genes (TSGs). The chain is GTPase KRas (kras) from Kryptolebias marmoratus (Mangrove killifish).